The sequence spans 221 residues: Uracil-DNA glycosylase (221 aa).

Aspartate 64 acts as the Proton acceptor in catalysis.

It belongs to the uracil-DNA glycosylase (UDG) superfamily. UNG family.

It localises to the cytoplasm. It catalyses the reaction Hydrolyzes single-stranded DNA or mismatched double-stranded DNA and polynucleotides, releasing free uracil.. Functionally, excises uracil residues from the DNA which can arise as a result of misincorporation of dUMP residues by DNA polymerase or due to deamination of cytosine. The sequence is that of Uracil-DNA glycosylase from Mycoplasmopsis pulmonis (strain UAB CTIP) (Mycoplasma pulmonis).